Reading from the N-terminus, the 1835-residue chain is AT-rich interactive domain-containing protein 2 (1835 aa).

Position 2 is an N-acetylalanine (alanine 2). Serine 4 carries the phosphoserine modification. Glycyl lysine isopeptide (Lys-Gly) (interchain with G-Cter in SUMO2) cross-links involve residues lysine 7, lysine 15, and lysine 119. Positions 13–105 (RRKGLAFLDE…YLEKYEKVHH (93 aa)) constitute an ARID domain. The LXXLL signature appears at 313-317 (LRFLL). The RFX-type winged-helix DNA-binding region spans 524–603 (ACQWLNAHFE…IHVVGVKRRA (80 aa)). Residue lysine 555 forms a Glycyl lysine isopeptide (Lys-Gly) (interchain with G-Cter in SUMO2) linkage. 2 positions are modified to phosphoserine: serine 631 and serine 635. At threonine 653 the chain carries Phosphothreonine. Serine 689 is modified (phosphoserine). Phosphothreonine is present on threonine 692. Disordered regions lie at residues 819 to 844 (QQLI…QSQD), 962 to 1057 (LTGQ…SGES), 1266 to 1287 (MENP…KENE), 1295 to 1314 (NGRK…KIQS), and 1321 to 1341 (LISN…KQNS). Low complexity-rich tracts occupy residues 823-843 (TTSP…SQSQ), 985-996 (PTAMSSSSTPQS), and 1025-1044 (QVQV…QPQQ). At serine 1300 the chain carries Phosphoserine. The segment covering 1301 to 1314 (DSSLPPSNSGKIQS) has biased composition (polar residues). Phosphoserine is present on residues serine 1391 and serine 1496. Disordered regions lie at residues 1488 to 1522 (DSGS…AEDT) and 1572 to 1629 (SAVQ…RKPG). The segment covering 1491-1509 (SKVSHSPALSSDVRSTNGT) has biased composition (polar residues). A compositionally biased stretch (basic and acidic residues) spans 1513-1522 (KTVKRPAEDT). A compositionally biased stretch (polar residues) spans 1573–1592 (AVQQKQQHPPTYVQNVVPQN). Low complexity predominate over residues 1602-1623 (QVQGQPNSSQPSPFSGSSQPGD). Residues 1632–1657 (FMCLWQSCKKWFQTPSQVFYHAATEH) form a C2H2-type zinc finger. Residues lysine 1701, lysine 1716, and lysine 1731 each participate in a glycyl lysine isopeptide (Lys-Gly) (interchain with G-Cter in SUMO2) cross-link. A disordered region spans residues 1703–1728 (DEPGQAGSQKSSTKQPTVGGTSSTPR). Residues 1708-1728 (AGSQKSSTKQPTVGGTSSTPR) are compositionally biased toward polar residues.

As to quaternary structure, component of the SWI/SNF-B (PBAF) chromatin remodeling complex, at least composed of SMARCA4/BRG1, SMARCB1/BAF47/SNF5, ACTL6A/BAF53A or ACTL6B/BAF53B, SMARCE1/BAF57, SMARCD1/BAF60A, SMARCD2/BAF60B, perhaps SMARCD3/BAF60C, SMARCC1/BAF155, SMARCC2/BAF170, PBRM1/BAF180, ARID2/BAF200 and actin. Interacts with SRF. Forms complexes with SRF and SRF cofactors MYOCD, NKX2-5 and SRFBP1. As to expression, highly expressed in heart.

The protein localises to the nucleus. Involved in transcriptional activation and repression of select genes by chromatin remodeling (alteration of DNA-nucleosome topology). Required for the stability of the SWI/SNF chromatin remodeling complex SWI/SNF-B (PBAF). May be involved in targeting the complex to different genes. May be involved in regulating transcriptional activation of cardiac genes. The protein is AT-rich interactive domain-containing protein 2 of Homo sapiens (Human).